A 157-amino-acid chain; its full sequence is 2-C-methyl-D-erythritol 2,4-cyclodiphosphate synthase (157 aa).

2 residues coordinate a divalent metal cation: Asp8 and His10. 4-CDP-2-C-methyl-D-erythritol 2-phosphate-binding positions include 8 to 10 and 35 to 36; these read DIH and HS. His43 contributes to the a divalent metal cation binding site. Residues 57-59, 62-66, and Lys142 contribute to the 4-CDP-2-C-methyl-D-erythritol 2-phosphate site; these read DIG and FPNND.

Belongs to the IspF family. In terms of assembly, homotrimer. The cofactor is a divalent metal cation.

It catalyses the reaction 4-CDP-2-C-methyl-D-erythritol 2-phosphate = 2-C-methyl-D-erythritol 2,4-cyclic diphosphate + CMP. The protein operates within isoprenoid biosynthesis; isopentenyl diphosphate biosynthesis via DXP pathway; isopentenyl diphosphate from 1-deoxy-D-xylulose 5-phosphate: step 4/6. Its function is as follows. Involved in the biosynthesis of isopentenyl diphosphate (IPP) and dimethylallyl diphosphate (DMAPP), two major building blocks of isoprenoid compounds. Catalyzes the conversion of 4-diphosphocytidyl-2-C-methyl-D-erythritol 2-phosphate (CDP-ME2P) to 2-C-methyl-D-erythritol 2,4-cyclodiphosphate (ME-CPP) with a corresponding release of cytidine 5-monophosphate (CMP). In Wigglesworthia glossinidia brevipalpis, this protein is 2-C-methyl-D-erythritol 2,4-cyclodiphosphate synthase.